Consider the following 658-residue polypeptide: Threonine--tRNA ligase (658 aa).

The region spanning 1–64 (MSNTVSLQFP…GASGKVEIIT (64 aa)) is the TGS domain. The interval 246 to 548 (DHRRLGREMD…LIENFAGHMP (303 aa)) is catalytic. 3 residues coordinate Zn(2+): Cys343, His394, and His525.

This sequence belongs to the class-II aminoacyl-tRNA synthetase family. In terms of assembly, homodimer. Requires Zn(2+) as cofactor.

It is found in the cytoplasm. It carries out the reaction tRNA(Thr) + L-threonine + ATP = L-threonyl-tRNA(Thr) + AMP + diphosphate + H(+). Functionally, catalyzes the attachment of threonine to tRNA(Thr) in a two-step reaction: L-threonine is first activated by ATP to form Thr-AMP and then transferred to the acceptor end of tRNA(Thr). Also edits incorrectly charged L-seryl-tRNA(Thr). The chain is Threonine--tRNA ligase from Brucella canis (strain ATCC 23365 / NCTC 10854 / RM-666).